Reading from the N-terminus, the 149-residue chain is Myoglobin (149 aa).

An N-acetylthreonine modification is found at T2. Residues 2–143 (TEWEHVNKVW…ICSDLETLYK (142 aa)) form the Globin domain. H60 is a nitrite binding site. H60 is an O2 binding site. H89 provides a ligand contact to heme b.

This sequence belongs to the globin family. Monomeric.

It is found in the cytoplasm. It localises to the sarcoplasm. The enzyme catalyses Fe(III)-heme b-[protein] + nitric oxide + H2O = Fe(II)-heme b-[protein] + nitrite + 2 H(+). The catalysed reaction is H2O2 + AH2 = A + 2 H2O. Monomeric heme protein which primary function is to store oxygen and facilitate its diffusion within muscle tissues. Reversibly binds oxygen through a pentacoordinated heme iron and enables its timely and efficient release as needed during periods of heightened demand. Depending on the oxidative conditions of tissues and cells, and in addition to its ability to bind oxygen, it also has a nitrite reductase activity whereby it regulates the production of bioactive nitric oxide. Under stress conditions, like hypoxia and anoxia, it also protects cells against reactive oxygen species thanks to its pseudoperoxidase activity. The polypeptide is Myoglobin (mb) (Heterodontus portusjacksoni (Port Jackson shark)).